The following is a 601-amino-acid chain: Oligoendopeptidase F, plasmid (601 aa).

His387 contributes to the Zn(2+) binding site. Glu388 is an active-site residue. Zn(2+) is bound by residues His391 and His394.

It belongs to the peptidase M3B family. Zn(2+) is required as a cofactor.

Its function is as follows. Hydrolyzes peptides containing between 7 and 17 amino acids with a rather wide specificity. The chain is Oligoendopeptidase F, plasmid (pepF1) from Lactococcus lactis subsp. cremoris (Streptococcus cremoris).